The following is a 265-amino-acid chain: Novel plant SNARE 11 (265 aa).

Over 1–215 (MDPISAVSEE…IGRQVATDKC (215 aa)) the chain is Cytoplasmic. Residues 30–75 (QKLEKIKDANRQSRQLEELTDKMRDCKSLIKDFDREIKSLESGNDA) adopt a coiled-coil conformation. The t-SNARE coiled-coil homology domain occupies 144 to 206 (NSMMDDTDQA…KKASKLVKEI (63 aa)). Residues 216–236 (IMAFLFLIVIGVIAIIIVKIV) form a helical; Anchor for type IV membrane protein membrane-spanning segment. The Vesicular segment spans residues 237–265 (NPNNKDIRDIPGVGLAPPAMNRRLLWNHY).

This sequence belongs to the novel plant SNARE family. Interacts with KNOLLE to form a t-SNARE complex. Does not interact with SYP21, VTI12 or VPS45. As to expression, expressed in roots, stems, flower, siliques, expanding leaves, but not in mature leaves. Not limited to dividing cells.

It is found in the membrane. T-SNARE involved in diverse vesicle trafficking and membrane fusion processes, including cell plate formation. The protein is Novel plant SNARE 11 (NPSN11) of Arabidopsis thaliana (Mouse-ear cress).